A 328-amino-acid polypeptide reads, in one-letter code: MTERRIIHIDMDYFFAQVEMRDNPKLKGKPVIVGGKASSRGVVSTASYEARKYGVHSAMPMSQAHKLCPNGYFVTSNFGAYRETSAQIMSIFRSYTDKVEPMSLDEAYLDITELVRPDLPASKIAQYIRKDILENTHLTASAGVSYNKFLAKLASGMNKPYGMTVIDYQNVHDILMTLDIGDFPGVGKASKKVMHDNGIFNGRDLYEKTEFELIRLFGKRGRGLYNKARGIDHSEVKSSRVRKSVGTERTFATDVNDDEEILRKVWELSGKTAERLNKLQKSAKTVTVKIKTYQFETLSKQMSLRDSVSSEEDIYNIAYLLYNDLKDP.

Positions 6–187 (IIHIDMDYFF…LDIGDFPGVG (182 aa)) constitute a UmuC domain. Asp-10 and Asp-105 together coordinate Mg(2+). Residue Glu-106 is part of the active site.

Belongs to the DNA polymerase type-Y family. As to quaternary structure, monomer. The cofactor is Mg(2+).

The protein resides in the cytoplasm. It carries out the reaction DNA(n) + a 2'-deoxyribonucleoside 5'-triphosphate = DNA(n+1) + diphosphate. Functionally, poorly processive, error-prone DNA polymerase involved in untargeted mutagenesis. Copies undamaged DNA at stalled replication forks, which arise in vivo from mismatched or misaligned primer ends. These misaligned primers can be extended by PolIV. Exhibits no 3'-5' exonuclease (proofreading) activity. May be involved in translesional synthesis, in conjunction with the beta clamp from PolIII. This is DNA polymerase IV from Staphylococcus aureus (strain bovine RF122 / ET3-1).